We begin with the raw amino-acid sequence, 79 residues long: MDVKETILNIIQELFMEDVSEMMDEDLLHAGVLDSMGTVELIVELESRFNITVPVSEFGREDWNTANKIISGVVELMHA.

One can recognise a Carrier domain in the interval 1-77 (MDVKETILNI…KIISGVVELM (77 aa)). An O-(pantetheine 4'-phosphoryl)serine modification is found at Ser35.

It belongs to the DltC family. 4'-phosphopantetheine is transferred from CoA to a specific serine of apo-DCP.

It is found in the cytoplasm. It functions in the pathway cell wall biogenesis; lipoteichoic acid biosynthesis. Its function is as follows. Carrier protein involved in the D-alanylation of lipoteichoic acid (LTA). The loading of thioester-linked D-alanine onto DltC is catalyzed by D-alanine--D-alanyl carrier protein ligase DltA. The DltC-carried D-alanyl group is further transferred to cell membrane phosphatidylglycerol (PG) by forming an ester bond, probably catalyzed by DltD. D-alanylation of LTA plays an important role in modulating the properties of the cell wall in Gram-positive bacteria, influencing the net charge of the cell wall. The polypeptide is D-alanyl carrier protein (Streptococcus suis (strain 98HAH33)).